An 835-amino-acid chain; its full sequence is Leucine--tRNA ligase (835 aa).

A 'HIGH' region motif is present at residues 36-46; the sequence is PYPSGKIHVGH. Residues 602-606 carry the 'KMSKS' region motif; it reads KMSKS. Lys-605 serves as a coordination point for ATP.

The protein belongs to the class-I aminoacyl-tRNA synthetase family.

It localises to the cytoplasm. The enzyme catalyses tRNA(Leu) + L-leucine + ATP = L-leucyl-tRNA(Leu) + AMP + diphosphate. The chain is Leucine--tRNA ligase from Rickettsia peacockii (strain Rustic).